The following is a 238-amino-acid chain: MEESINPIISIGPVIFNLTMLAMTLLIVGVIFVFIYWASRNMTLKPKGKQNILEYVYDFVIGFTEPNIGSRYMKDYSLFFLCLFLFMVIANNLGLMTKLQTIDGTNWWSSPTANLQYDLTLSFLVILLTHIESVRRRGFKKSIKSFMSPVFVIPMNILEEFTNFLSLALRIFGNIFAGEVMTSLLLLLSHQAIYWYPVAFGANLAWTAFSVFISCIQAYVFTLLTSVYLGNKINIEEE.

The next 5 membrane-spanning stretches (helical) occupy residues 15–35, 76–96, 111–131, 167–187, and 208–230; these read IFNLTMLAMTLLIVGVIFVFI, YSLFFLCLFLFMVIANNLGLM, PTANLQYDLTLSFLVILLTHI, LALRIFGNIFAGEVMTSLLLL, and AFSVFISCIQAYVFTLLTSVYLG.

Belongs to the ATPase A chain family. F-type ATPases have 2 components, CF(1) - the catalytic core - and CF(0) - the membrane proton channel. CF(1) has five subunits: alpha(3), beta(3), gamma(1), delta(1), epsilon(1). CF(0) has three main subunits: a(1), b(2) and c(9-12). The alpha and beta chains form an alternating ring which encloses part of the gamma chain. CF(1) is attached to CF(0) by a central stalk formed by the gamma and epsilon chains, while a peripheral stalk is formed by the delta and b chains.

The protein resides in the cell membrane. Functionally, key component of the proton channel; it plays a direct role in the translocation of protons across the membrane. The chain is ATP synthase subunit a from Streptococcus pneumoniae serotype 19F (strain G54).